The chain runs to 59 residues: Photosystem II reaction center protein K (59 aa).

A propeptide spanning residues 1–22 is cleaved from the precursor; the sequence is MLNIFSLICLNSALHSSSFFFA. Residues 38–58 form a helical membrane-spanning segment; sequence MPVIPVLFFLLALVWQAAVSF.

This sequence belongs to the PsbK family. PSII is composed of 1 copy each of membrane proteins PsbA, PsbB, PsbC, PsbD, PsbE, PsbF, PsbH, PsbI, PsbJ, PsbK, PsbL, PsbM, PsbT, PsbX, PsbY, PsbZ, Psb30/Ycf12, at least 3 peripheral proteins of the oxygen-evolving complex and a large number of cofactors. It forms dimeric complexes.

It localises to the plastid. It is found in the chloroplast thylakoid membrane. Its function is as follows. One of the components of the core complex of photosystem II (PSII). PSII is a light-driven water:plastoquinone oxidoreductase that uses light energy to abstract electrons from H(2)O, generating O(2) and a proton gradient subsequently used for ATP formation. It consists of a core antenna complex that captures photons, and an electron transfer chain that converts photonic excitation into a charge separation. The chain is Photosystem II reaction center protein K from Calycanthus floridus var. glaucus (Eastern sweetshrub).